The chain runs to 1041 residues: Histone deacetylase complex subunit SAP130-B (1041 aa).

5 disordered regions span residues 1 to 62, 111 to 131, 572 to 592, 614 to 769, and 806 to 852; these read MSSQ…QEPV, KSTM…SAVP, TNQG…EPKS, TPAG…PSGA, and VLAN…DEER. A compositionally biased stretch (polar residues) spans 18–30; the sequence is VSNSGASVGQNVQ. The span at 33 to 42 shows a compositional bias: basic and acidic residues; the sequence is EVAREIDVQS. Residues 576-592 are compositionally biased toward low complexity; sequence VQTSSVSSQQASSEPKS. Residues 614–641 show a composition bias toward polar residues; the sequence is TPAGTTVMQSHSQSPGIGSSPAQGSSPR. The segment covering 707 to 728 has biased composition (low complexity); that stretch reads PGAADQPSAAASLPSSHHPTAA.

Belongs to the SAP130 family.

Its subcellular location is the nucleus. Its function is as follows. Acts as a transcriptional repressor. The protein is Histone deacetylase complex subunit SAP130-B (sap130-b) of Xenopus laevis (African clawed frog).